We begin with the raw amino-acid sequence, 634 residues long: DNA-directed RNA polymerase subunit gamma (634 aa).

Residues Cys-74, Cys-76, Cys-89, and Cys-92 each contribute to the Zn(2+) site. The Mg(2+) site is built by Asp-471, Asp-473, and Asp-475.

The protein belongs to the RNA polymerase beta' chain family. RpoC1 subfamily. In terms of assembly, in cyanobacteria the RNAP catalytic core is composed of 2 alpha, 1 beta, 1 beta', 1 gamma and 1 omega subunit. When a sigma factor is associated with the core the holoenzyme is formed, which can initiate transcription. Mg(2+) serves as cofactor. The cofactor is Zn(2+).

It carries out the reaction RNA(n) + a ribonucleoside 5'-triphosphate = RNA(n+1) + diphosphate. DNA-dependent RNA polymerase catalyzes the transcription of DNA into RNA using the four ribonucleoside triphosphates as substrates. In Prochlorococcus marinus (strain MIT 9313), this protein is DNA-directed RNA polymerase subunit gamma.